Here is a 97-residue protein sequence, read N- to C-terminus: Class II hydrophobin A (97 aa).

An N-terminal signal peptide occupies residues M1–A15. 3 disulfide bridges follow: C30/C79, C40/C53, and C80/C91.

This sequence belongs to the cerato-ulmin hydrophobin family.

The protein localises to the secreted. The protein resides in the cell wall. It localises to the vacuole. It is found in the cytoplasmic vesicle. In terms of biological role, aerial growth, conidiation, and dispersal of filamentous fungi in the environment rely upon a capability of their secreting small amphipathic proteins called hydrophobins (HPBs) with low sequence identity. Class I can self-assemble into an outermost layer of rodlet bundles on aerial cell surfaces, conferring cellular hydrophobicity that supports fungal growth, development and dispersal; whereas Class II form highly ordered films at water-air interfaces through intermolecular interactions but contribute nothing to the rodlet structure. Hyd2A contributes to certain cell wall-related features, such as hydrophobicity but is not involved in cell wall-related events during fungal proliferation in host hemocoel. Does not contribute to conidial hydrophobicity. Involved in insect hemocoel colonization independent of cell hydrophobicity, as well as in the asexual development. The polypeptide is Class II hydrophobin A (Beauveria bassiana (strain ARSEF 2860) (White muscardine disease fungus)).